Reading from the N-terminus, the 247-residue chain is tRNA pseudouridine synthase A (247 aa).

The Nucleophile role is filled by D52. Residue Y110 participates in substrate binding.

It belongs to the tRNA pseudouridine synthase TruA family. In terms of assembly, homodimer.

It carries out the reaction uridine(38/39/40) in tRNA = pseudouridine(38/39/40) in tRNA. Functionally, formation of pseudouridine at positions 38, 39 and 40 in the anticodon stem and loop of transfer RNAs. This chain is tRNA pseudouridine synthase A, found in Geobacter sp. (strain M21).